The primary structure comprises 213 residues: tRNA (guanine-N(7)-)-methyltransferase (213 aa).

4 residues coordinate S-adenosyl-L-methionine: Glu-43, Asp-68, Asn-95, and Asn-117. Residues Asp-153 and 190 to 193 contribute to the substrate site; that span reads TEYE.

It belongs to the class I-like SAM-binding methyltransferase superfamily. TrmB family.

The enzyme catalyses guanosine(46) in tRNA + S-adenosyl-L-methionine = N(7)-methylguanosine(46) in tRNA + S-adenosyl-L-homocysteine. Its pathway is tRNA modification; N(7)-methylguanine-tRNA biosynthesis. Functionally, catalyzes the formation of N(7)-methylguanine at position 46 (m7G46) in tRNA. The chain is tRNA (guanine-N(7)-)-methyltransferase from Desulfitobacterium hafniense (strain DSM 10664 / DCB-2).